A 550-amino-acid polypeptide reads, in one-letter code: Arginine--tRNA ligase (550 aa).

Positions 130-140 match the 'HIGH' region motif; that stretch reads ANPTGPIHLGG.

The protein belongs to the class-I aminoacyl-tRNA synthetase family. In terms of assembly, monomer.

The protein localises to the cytoplasm. It catalyses the reaction tRNA(Arg) + L-arginine + ATP = L-arginyl-tRNA(Arg) + AMP + diphosphate. The polypeptide is Arginine--tRNA ligase (Rhodococcus jostii (strain RHA1)).